The following is a 342-amino-acid chain: Platelet-activating factor receptor (342 aa).

The Extracellular portion of the chain corresponds to 1-16; the sequence is MEPNNSFRVDSEFRYT. A glycan (N-linked (GlcNAc...) asparagine) is linked at Asn4. The helical transmembrane segment at 17–38 threads the bilayer; sequence LFPIFYSIVFVLGVIANSYVLW. At 39–54 the chain is on the cytoplasmic side; it reads VFARLYPSKKFNEIKI. Residues 55–74 traverse the membrane as a helical segment; sequence FMVNLTMADLLFLVTLPLWI. Over 75–91 the chain is Extracellular; the sequence is VYYYNQGDWILPKFLCN. Cysteines 90 and 173 form a disulfide. The chain crosses the membrane as a helical span at residues 92–113; that stretch reads LAGCFFFINTYCSVAFLAVITY. Over 114 to 133 the chain is Cytoplasmic; the sequence is NRFQAVTRPIKTAQATTRKR. The helical transmembrane segment at 134–155 threads the bilayer; that stretch reads GILLSLIIWVSIVGAASYFFVL. Topologically, residues 156–184 are extracellular; that stretch reads DSTNREPNKTGSANITRCFEHYEKGSIPV. 2 N-linked (GlcNAc...) asparagine glycosylation sites follow: Asn163 and Asn169. Residues 185 to 205 traverse the membrane as a helical segment; it reads LTIHIFLVFSFFLVFLIILFC. Residues 206-233 lie on the Cytoplasmic side of the membrane; that stretch reads NLVIIRTLLTQQVQIQRNAEVKRRALWM. A helical transmembrane segment spans residues 234 to 254; it reads VCTVLAVFIICFVPHHLVQLP. Topologically, residues 255-276 are extracellular; sequence WTLAELGFQDTDFHQAINDAHQ. The chain crosses the membrane as a helical span at residues 277-296; the sequence is VTLCLLSTNCVLDPIIYCFL. The Cytoplasmic portion of the chain corresponds to 297-342; sequence TKKFRKHLTEKLYSMRESRKCSRATSETGTEVVMQLKDVPVKSLKY.

The protein belongs to the G-protein coupled receptor 1 family. In terms of assembly, interacts with ARRB1. As to expression, found in oviductal epithelial and stroma cells. Levels in the oviduct are raised at days 2-4 of both pregnancy and of the estrus cycle. In the endometrium, localization is predominantly to the apical borders of glandular and luminal epithelial cells. Expressed at lower levels in endometrial stromal cells. Levels in the endometrium are increased at day 20 of pregnancy (at protein level).

It localises to the cell membrane. Its function is as follows. Receptor for platelet activating factor, a chemotactic phospholipid mediator that possesses potent inflammatory, smooth-muscle contractile and hypotensive activity. Seems to mediate its action via a G protein that activates a phosphatidylinositol-calcium second messenger system. May be involved in the morphological and physical modifications of the oviduct and uterus during the estrus cycle and early pregnancy. The polypeptide is Platelet-activating factor receptor (Bos taurus (Bovine)).